A 270-amino-acid chain; its full sequence is Large ribosomal subunit protein bL21m (270 aa).

A mitochondrion-targeting transit peptide spans 1 to 68 (MASLRCFREL…HWYRSQDRCF (68 aa)). The segment at 68–113 (FSSNTKDTDEDEESSEGEDDDEEEGEDFEDSADMEVEREYSPAEKV) is disordered. Over residues 75 to 101 (TDEDEESSEGEDDDEEEGEDFEDSADM) the composition is skewed to acidic residues. Over residues 102 to 113 (EVEREYSPAEKV) the composition is skewed to basic and acidic residues.

The protein belongs to the bacterial ribosomal protein bL21 family. In terms of assembly, component of the mitochondrial ribosome large subunit. Constitutively expressed in roots, stems, leaves, flowers, pistils and siliques.

The protein resides in the mitochondrion. Functionally, this protein binds to 23S ribosomal RNA in the presence of protein L20. Required for karyogamy during female gametophyte development, when the two polar nuclei fuse to form the diploid central cell nucleus, and during double fertilization of the egg cell and the central cell. In Arabidopsis thaliana (Mouse-ear cress), this protein is Large ribosomal subunit protein bL21m.